We begin with the raw amino-acid sequence, 469 residues long: Regulator of G-protein signaling 7 (469 aa).

Residues 37–112 enclose the DEP domain; sequence EKNGIPIRTV…DDGTFYRFQT (76 aa). Phosphoserine is present on residues Ser-229 and Ser-241. The tract at residues 235 to 256 is disordered; the sequence is NDIRSHSPTHTPTPETKPPTED. Thr-243 bears the Phosphothreonine mark. Residues 255 to 316 enclose the G protein gamma domain; sequence EDELQQQIKY…LSDDTTFWEL (62 aa). The RGS domain maps to 333–448; the sequence is GMDEALKDPV…IRSSAYQELL (116 aa). A Phosphoserine modification is found at Ser-434.

As to quaternary structure, interacts with GNB5, forming the RGS7-GNB5 complex. Interacts with GPR158; promotes the GTPase activator activity of the RGS7-GNB5 complex in absence of glycine, in contrast GTPase activator activity of the RGS7-GNB5 complex is inhibited in presence of glycine. Interacts with GPR179. Interacts with PKD1; this prevents rapid proteasomal degradation. Interacts with RGS7BP, leading to regulate the subcellular location of the heterodimer formed with GNB5. Interacts (phosphorylated form) with 14-3-3 protein YWHAQ. Interacts with SNAPIN. Interacts with GNAI1. Interacts with GNAO1, GNAI3 and GNAZ. In terms of processing, palmitoylated. Post-translationally, ubiquitinated, leading to rapid proteasomal degradation. Phosphorylation and subsequent interaction with 14-3-3 proteins inhibits GAP activity. As to expression, detected in retina (at protein level).

The protein resides in the cytoplasm. Its subcellular location is the cytosol. The protein localises to the cell membrane. It localises to the membrane. Its function is as follows. GTPase activator component of the RGS7-GNB5 complex that regulates G protein-coupled receptor signaling cascades. The RGS7-GNB5 complex acts as an inhibitor signal transduction by promoting the GTPase activity of G protein alpha subunits, such as GNAO1, thereby driving them into their inactive GDP-bound form. May play a role in synaptic vesicle exocytosis. Glycine-dependent regulation of the RGS7-GNB5 complex by GPR158 affects mood and cognition via its ability to regulate neuronal excitability in L2/L3 pyramidal neurons of the prefrontal cortex. Modulates the activity of potassium channels that are activated by GNAO1 in response to muscarinic acetylcholine receptor M2/CHRM2 signaling. This is Regulator of G-protein signaling 7 (RGS7) from Bos taurus (Bovine).